We begin with the raw amino-acid sequence, 216 residues long: MAPGSWFSPLLIAVVTLGLPQGAAATFPTMPLSNLFTNAVLRAQHLHLLAAETYKEFERTYIPEDQRYTNKNSQAAFCYSETIPAPTGKDDAQQKSDMELLRFSLVLIQSWLTPMQYLSKVFTNNLVFGTSDRVFEKLKDLEEGIQALMRELEDRSPRGPQLLRPTYDRFDIHLRSEDALLKNYGLLSCFKKDLHKVETYLKVMKCRRFGESNCNI.

A signal peptide spans 1 to 25; it reads MAPGSWFSPLLIAVVTLGLPQGAAA. Residue histidine 45 participates in Zn(2+) binding. An intrachain disulfide couples cysteine 78 to cysteine 189. Glutamate 198 is a binding site for Zn(2+). Residues cysteine 206 and cysteine 214 are joined by a disulfide bond.

It belongs to the somatotropin/prolactin family. As to expression, pituitary gland.

The protein localises to the secreted. Its function is as follows. Growth hormone plays an important role in growth control. This Meleagris gallopavo (Wild turkey) protein is Somatotropin (GH).